We begin with the raw amino-acid sequence, 859 residues long: Nitrate reductase [NADPH] (859 aa).

Cys-137 serves as a coordination point for Mo-molybdopterin. Positions 502 to 578 (DVVIKYSEFE…LPSMHLGRLE (77 aa)) constitute a Cytochrome b5 heme-binding domain. Residues His-538 and His-561 each coordinate heme. Residues 602-713 (RKWHKITLAE…KGPVGEFEYV (112 aa)) enclose the FAD-binding FR-type domain. FAD is bound by residues 655-658 (RAYT), 672-676 (LIKVY), Phe-677, 687-689 (IMT), Ser-737, and Thr-740. Residue 829-838 (MLLVCGPPGM) participates in NADP(+) binding.

It belongs to the nitrate reductase family. In terms of assembly, homodimer. It depends on FAD as a cofactor. Requires heme as cofactor. The cofactor is Mo-molybdopterin.

It carries out the reaction nitrite + NADP(+) + H2O = nitrate + NADPH + H(+). In terms of biological role, nitrate reductase is a key enzyme involved in the first step of nitrate assimilation in plants, fungi and bacteria. The chain is Nitrate reductase [NADPH] (YNR1) from Pichia angusta (Yeast).